The chain runs to 302 residues: Oxygen-dependent coproporphyrinogen-III oxidase (302 aa).

Ser94 is a substrate binding site. His98 and His108 together coordinate a divalent metal cation. His108 (proton donor) is an active-site residue. 110–112 (NVR) is a binding site for substrate. A divalent metal cation is bound by residues His147 and His177. The interval 242 to 277 (YVEFNLVFDRGTLFGLQSGGRAESILMSMPPVANWR) is important for dimerization. 260-262 (GGR) provides a ligand contact to substrate.

Belongs to the aerobic coproporphyrinogen-III oxidase family. As to quaternary structure, homodimer. A divalent metal cation serves as cofactor.

The protein resides in the cytoplasm. It carries out the reaction coproporphyrinogen III + O2 + 2 H(+) = protoporphyrinogen IX + 2 CO2 + 2 H2O. Its pathway is porphyrin-containing compound metabolism; protoporphyrin-IX biosynthesis; protoporphyrinogen-IX from coproporphyrinogen-III (O2 route): step 1/1. Involved in the heme biosynthesis. Catalyzes the aerobic oxidative decarboxylation of propionate groups of rings A and B of coproporphyrinogen-III to yield the vinyl groups in protoporphyrinogen-IX. The chain is Oxygen-dependent coproporphyrinogen-III oxidase from Ralstonia pickettii (strain 12J).